Consider the following 148-residue polypeptide: Large ribosomal subunit protein bL9 (148 aa).

A disordered region spans residues Gln-46–Ala-65. The span at Lys-52–Ala-65 shows a compositional bias: basic and acidic residues.

Belongs to the bacterial ribosomal protein bL9 family.

Functionally, binds to the 23S rRNA. This chain is Large ribosomal subunit protein bL9, found in Staphylococcus carnosus (strain TM300).